A 179-amino-acid polypeptide reads, in one-letter code: Hypoxanthine phosphoribosyltransferase (179 aa).

Arg45 and Gly46 together coordinate diphosphate. Glu101 contributes to the GMP binding site. Glu101 is a binding site for IMP. Mg(2+)-binding residues include Glu101 and Asp102. Asp105 functions as the Proton acceptor in the catalytic mechanism. GMP is bound by residues 105-110 (DTGYTL), Lys133, and Asp161. IMP contacts are provided by residues 105 to 110 (DTGYTL) and Lys133. Arg167 is a binding site for diphosphate.

This sequence belongs to the purine/pyrimidine phosphoribosyltransferase family. Homotetramer. The cofactor is Mg(2+).

It is found in the cytoplasm. The enzyme catalyses IMP + diphosphate = hypoxanthine + 5-phospho-alpha-D-ribose 1-diphosphate. It catalyses the reaction GMP + diphosphate = guanine + 5-phospho-alpha-D-ribose 1-diphosphate. It functions in the pathway purine metabolism; IMP biosynthesis via salvage pathway; IMP from hypoxanthine: step 1/1. Its function is as follows. Purine salvage pathway enzyme which catalyzes the transfer of the ribosyl-5-phosphate group from 5-phospho-alpha-D-ribose 1-diphosphate (PRPP) to the N9 position of hypoxanthine to yield IMP (inosine 5'-monophosphate). To a lesser extent, can also act on guanine leading to GMP, but shows a highly less efficient activity with xanthine. This Haemophilus influenzae (strain ATCC 51907 / DSM 11121 / KW20 / Rd) protein is Hypoxanthine phosphoribosyltransferase (hpt).